The primary structure comprises 664 residues: uncharacterized protein (664 aa).

The N-terminal stretch at 1–25 (MSWKRYLKWVSFAIIPLLFANTSIK) is a signal peptide. A helical membrane pass occupies residues 625–645 (IIVYLIIGFSVLVLFITVFIY).

Belongs to the MG414/MG415 family.

It localises to the cell membrane. This is an uncharacterized protein from Mycoplasma genitalium (strain ATCC 33530 / DSM 19775 / NCTC 10195 / G37) (Mycoplasmoides genitalium).